Here is a 307-residue protein sequence, read N- to C-terminus: Ribonuclease Z (307 aa).

Residues His-63, His-65, Asp-67, His-68, His-143, Asp-213, and His-271 each contribute to the Zn(2+) site. Catalysis depends on Asp-67, which acts as the Proton acceptor.

This sequence belongs to the RNase Z family. In terms of assembly, homodimer. Zn(2+) is required as a cofactor.

The enzyme catalyses Endonucleolytic cleavage of RNA, removing extra 3' nucleotides from tRNA precursor, generating 3' termini of tRNAs. A 3'-hydroxy group is left at the tRNA terminus and a 5'-phosphoryl group is left at the trailer molecule.. Zinc phosphodiesterase, which displays some tRNA 3'-processing endonuclease activity. Probably involved in tRNA maturation, by removing a 3'-trailer from precursor tRNA. The polypeptide is Ribonuclease Z (Lactococcus lactis subsp. lactis (strain IL1403) (Streptococcus lactis)).